The sequence spans 784 residues: Toll-like receptor 2 (784 aa).

An N-terminal signal peptide occupies residues 1–20 (MPHTLWMVWVLGVIISLSKE). The Extracellular segment spans residues 21–587 (ESSNQASLSC…VRLSVSECHR (567 aa)). C30 and C36 form a disulfide bridge. 19 LRR repeats span residues 54 to 77 (VKCL…RYVN), 78 to 101 (LQAL…SLGR), 102 to 125 (LEHL…PLSS), 126 to 150 (LKFL…HLTK), 151 to 175 (LRIL…GLTF), 176 to 199 (LEEL…SIQN), 200 to 223 (VSHL…LTSS), 224 to 250 (VECL…TNSL), 251 to 278 (IKKF…QISG), 279 to 308 (LLEL…DPGK), 309 to 337 (VETL…LTER), 338 to 361 (VKRI…HLKS), 362 to 388 (LEYL…AWPS), 389 to 414 (LQTL…TLKN), 415 to 437 (LTNL…WPEK), 438 to 457 (MKYL…CIPK), 458 to 478 (TLEI…NLPQ), 479 to 500 (LKEL…LLPM), and 501 to 524 (LLVL…SFHT). N114 carries an N-linked (GlcNAc...) asparagine glycan. N199 carries an N-linked (GlcNAc...) asparagine glycan. The cysteines at positions 353 and 382 are disulfide-linked. N-linked (GlcNAc...) asparagine glycosylation is present at N414. The cysteines at positions 432 and 454 are disulfide-linked. Residue N442 is glycosylated (N-linked (GlcNAc...) asparagine). The LRRCT domain occupies 525-579 (LKTLEAGGNNFICSCEFLSFTQEQQALAKVLVDWPANYLCDSPSHVRGQRVQDVR). Residues 588 to 608 (AALVSGMCCALFLLILLMGVL) form a helical membrane-spanning segment. Over 609 to 784 (CHRFHGLWYM…WVNLRAAIKS (176 aa)) the chain is Cytoplasmic. A TIR domain is found at 639–782 (ICYDAFVSYS…GFWVNLRAAI (144 aa)). Residue K754 forms a Glycyl lysine isopeptide (Lys-Gly) (interchain with G-Cter in ubiquitin) linkage. The short motif at 761–778 (YLEWPMDEARQEGFWVNL) is the ATG16L1-binding motif element.

Belongs to the Toll-like receptor family. As to quaternary structure, interacts with LY96, TLR1 and TLR6 (via extracellular domain). TLR2 seems to exist in heterodimers with either TLR1 or TLR6 before stimulation by the ligand. The heterodimers form bigger oligomers in response to their corresponding ligands as well as further heterotypic associations with other receptors such as CD14 and/or CD36. Binds MYD88 (via TIR domain). Interacts with TICAM1. Interacts with CNPY3. Interacts with ATG16L1. Interacts with PPP1R11. Interacts with TICAM2. Interacts with TIRAP. In terms of processing, ubiquitinated at Lys-754 by PPP1R11, leading to its degradation. Deubiquitinated by USP2. Glycosylation of Asn-442 is critical for secretion of the N-terminal ectodomain of TLR2.

The protein resides in the membrane. It localises to the cytoplasmic vesicle. Its subcellular location is the phagosome membrane. The protein localises to the membrane raft. Cooperates with LY96 to mediate the innate immune response to bacterial lipoproteins and other microbial cell wall components. Cooperates with TLR1 or TLR6 to mediate the innate immune response to bacterial lipoproteins or lipopeptides. Acts via MYD88 and TRAF6, leading to NF-kappa-B activation, cytokine secretion and the inflammatory response. May also promote apoptosis in response to lipoproteins. Forms activation clusters composed of several receptors depending on the ligand, these clusters trigger signaling from the cell surface and subsequently are targeted to the Golgi in a lipid-raft dependent pathway. Forms the cluster TLR2:TLR6:CD14:CD36 in response to diacylated lipopeptides and TLR2:TLR1:CD14 in response to triacylated lipopeptides. This is Toll-like receptor 2 (TLR2) from Macaca mulatta (Rhesus macaque).